Here is a 412-residue protein sequence, read N- to C-terminus: [Pyruvate dehydrogenase (acetyl-transferring)] kinase isozyme 4, mitochondrial (412 aa).

One can recognise a Histidine kinase domain in the interval 138 to 368; that stretch reads ILEYKDTCTV…DAIIYLKALS (231 aa). ATP-binding positions include 254 to 261, Asp-293, 312 to 313, and 329 to 334; these read ELFKNAMR, ST, and GFGYGL.

Belongs to the PDK/BCKDK protein kinase family. In terms of assembly, homodimer. Interacts with the pyruvate dehydrogenase complex subunit DLAT, and is part of the multimeric pyruvate dehydrogenase complex that contains multiple copies of pyruvate dehydrogenase (E1), dihydrolipoamide acetyltransferase (DLAT, E2) and lipoamide dehydrogenase (DLD, E3). In terms of tissue distribution, detected in skeletal muscle and heart.

It localises to the mitochondrion matrix. It catalyses the reaction L-seryl-[pyruvate dehydrogenase E1 alpha subunit] + ATP = O-phospho-L-seryl-[pyruvate dehydrogenase E1 alpha subunit] + ADP + H(+). Kinase that plays a key role in regulation of glucose and fatty acid metabolism and homeostasis via phosphorylation of the pyruvate dehydrogenase subunits PDHA1 and PDHA2. This inhibits pyruvate dehydrogenase activity, and thereby regulates metabolite flux through the tricarboxylic acid cycle, down-regulates aerobic respiration and inhibits the formation of acetyl-coenzyme A from pyruvate. Inhibition of pyruvate dehydrogenase decreases glucose utilization and increases fat metabolism in response to prolonged fasting and starvation. Plays an important role in maintaining normal blood glucose levels under starvation, and is involved in the insulin signaling cascade. Via its regulation of pyruvate dehydrogenase activity, plays an important role in maintaining normal blood pH and in preventing the accumulation of ketone bodies under starvation. In the fed state, mediates cellular responses to glucose levels and to a high-fat diet. Regulates both fatty acid oxidation and de novo fatty acid biosynthesis. Plays a role in the generation of reactive oxygen species. Protects detached epithelial cells against anoikis. Plays a role in cell proliferation via its role in regulating carbohydrate and fatty acid metabolism. The protein is [Pyruvate dehydrogenase (acetyl-transferring)] kinase isozyme 4, mitochondrial (PDK4) of Ictidomys tridecemlineatus (Thirteen-lined ground squirrel).